We begin with the raw amino-acid sequence, 282 residues long: MWNISEVVFQLPTSSASDRVLQPLWDYLLLRHYTLISSPFFPVLLAFSSYIIFSVPFAVLDVLGEKAPLFKYKIQKDRRPTVGMMLRTLWTAVYNHLVFVLPAVLITNVVMPMPPLPTVAPTVWEMFSGGLGALLVFDTQYFLWHMVHHKNPHLYRWVHAIHHDYISPFSWSTQHLSGVELMTVGFWSNIDPILLKCHPLTVWTLTVYSIWMSVEDHIGYDLPFSPGHLVPFGLLGGAMAHDMHHQKPSSNFAPFFSHWDKIFGTAITVKLTQKSEKEKQVA.

An N-linked (GlcNAc...) asparagine glycan is attached at asparagine 3. 3 helical membrane passes run phenylalanine 40 to leucine 60, methionine 85 to threonine 107, and phenylalanine 127 to valine 147. One can recognise a Fatty acid hydroxylase domain in the interval alanine 133–threonine 265. Positions tryptophan 144–histidine 148 match the Histidine box-1 motif. The short motif at histidine 159–histidine 163 is the Histidine box-2 element. Positions alanine 240–glutamine 246 match the Histidine box-3 motif.

It belongs to the sterol desaturase family. Requires Fe cation as cofactor.

The protein resides in the endoplasmic reticulum membrane. Its function is as follows. May catalyze the formation of 25-hydroxycholesterol from cholesterol. This is Cholesterol 25-hydroxylase-like protein 1, member 1 (ch25hl1.1) from Danio rerio (Zebrafish).